The chain runs to 494 residues: Ankyrin repeat domain-containing protein 33B (494 aa).

A disordered region spans residues 1–80; that stretch reads MVLLAGTGPE…SAESVPEGVP (80 aa). The segment covering 30–42 has biased composition (acidic residues); that stretch reads VEEDPADYEEFED. ANK repeat units follow at residues 84 to 113, 120 to 150, 154 to 183, 189 to 218, and 223 to 255; these read PETA…SVEE, NGRT…DVNW, EGNT…GLDL, FGFT…DVHA, and RGMS…PEQF. The segment at 349 to 494 is disordered; it reads RAARGPQAQE…RRTAPWKKRT (146 aa). Residues 371–382 are compositionally biased toward basic and acidic residues; sequence TGQEDADSREGS. Residue Ser405 is modified to Phosphoserine. Composition is skewed to basic and acidic residues over residues 440 to 451 and 459 to 487; these read RPARKGSTKDSG and RYKE…ERRT. A coiled-coil region spans residues 459 to 488; the sequence is RYKEAKEEKRKAEEAEKKRQAEAQKERRTA.

The protein is Ankyrin repeat domain-containing protein 33B (ANKRD33B) of Homo sapiens (Human).